The chain runs to 499 residues: Glycerol kinase (499 aa).

Position 13 (Thr-13) interacts with ADP. Thr-13, Thr-14, and Ser-15 together coordinate ATP. Thr-13 is a binding site for sn-glycerol 3-phosphate. Arg-17 is an ADP binding site. Positions 83, 84, 135, and 244 each coordinate sn-glycerol 3-phosphate. Glycerol-binding residues include Arg-83, Glu-84, Tyr-135, Asp-244, and Gln-245. ADP is bound by residues Thr-266 and Gly-309. Positions 266, 309, 313, and 410 each coordinate ATP. 2 residues coordinate ADP: Gly-410 and Asn-414.

This sequence belongs to the FGGY kinase family.

The catalysed reaction is glycerol + ATP = sn-glycerol 3-phosphate + ADP + H(+). It functions in the pathway polyol metabolism; glycerol degradation via glycerol kinase pathway; sn-glycerol 3-phosphate from glycerol: step 1/1. Its activity is regulated as follows. Inhibited by fructose 1,6-bisphosphate (FBP). Its function is as follows. Key enzyme in the regulation of glycerol uptake and metabolism. Catalyzes the phosphorylation of glycerol to yield sn-glycerol 3-phosphate. This is Glycerol kinase from Paraburkholderia phymatum (strain DSM 17167 / CIP 108236 / LMG 21445 / STM815) (Burkholderia phymatum).